The following is a 142-amino-acid chain: Large ribosomal subunit protein uL11 (142 aa).

It belongs to the universal ribosomal protein uL11 family. In terms of assembly, part of the ribosomal stalk of the 50S ribosomal subunit. Interacts with L10 and the large rRNA to form the base of the stalk. L10 forms an elongated spine to which L12 dimers bind in a sequential fashion forming a multimeric L10(L12)X complex. Post-translationally, one or more lysine residues are methylated.

Forms part of the ribosomal stalk which helps the ribosome interact with GTP-bound translation factors. The sequence is that of Large ribosomal subunit protein uL11 from Mesorhizobium japonicum (strain LMG 29417 / CECT 9101 / MAFF 303099) (Mesorhizobium loti (strain MAFF 303099)).